We begin with the raw amino-acid sequence, 433 residues long: Steroid hormone receptor ERR2 (433 aa).

The tract at residues 1–38 (MSSDDRHLGSSCGSFIKTEPSSPSSGIDALSHHSPSGS) is disordered. Low complexity predominate over residues 28–38 (DALSHHSPSGS). Residues 93–211 (YMLNAIPKRL…SPPAKKPLTK (119 aa)) form an interaction with NANOG region. Residues 100–186 (KRLCLVCGDI…RVRGGRQKYK (87 aa)) constitute a DNA-binding region (nuclear receptor). 2 consecutive NR C4-type zinc fingers follow at residues 103-123 (CLVCGDIASGYHYGVASCEAC) and 139-163 (CPATNECEITKRRRKSCQACRFMKC). The interval 203-433 (PPAKKPLTKI…LFLEMLEAKV (231 aa)) is essential for ESRRB transcriptional activity and interaction with NCOA3. One can recognise an NR LBD domain in the interval 208 to 432 (PLTKIVSYLL…KLFLEMLEAK (225 aa)).

This sequence belongs to the nuclear hormone receptor family. NR3 subfamily. Binds DNA as a monomer. Interacts with NR0B1; represses ESRRB activity at the GATA6 promoter. Interacts with NANOG; reciprocally modulates their transcriptional activities and activates POU5F1 expression. Interacts with NCOA3; mediates the interaction between ESRRB and RNA polymerase II complexes and allows NCOA3 corecruitment to ESRRB, KLF4, NANOG, and SOX2 enhancer regions to trigger ESRRB-dependent gene activation involved in self-renewal and pluripotency. Interacts with KDM1A; co-occupes the core set of ESRRB targets including ELF5 and EOMES. Interacts with the multiprotein complex Integrator, at least composed of INTS1, INTS2, INTS3, INTS4, INTS5, INTS6, INTS7, INTS8, INTS9/RC74, INTS10, INTS11/CPSF3L and INTS12; ESRRB is probably not a core component of the integrator complex and associates to integrator via its interaction with INTS1 and INTS9; attracts the transcriptional machinery. Interacts with JARID2. Interacts with POU5F1; recruits ESRRB near the POU5F1-SOX2 element in the NANOG proximal promoter leading to activation of NANOG expression; the interaction is DNA independent. Interacts with NFE2L2; represses NFE2L2 transcriptional activity. Isoform 1 interacts with ESR1. Post-translationally, acetylated by PCAF/KAT2 (in vitro).

It is found in the nucleus. Its subcellular location is the cytoplasm. The protein resides in the chromosome. Functionally, transcription factor that binds a canonical ESRRB recognition (ERRE) sequence 5'TCAAGGTCA-3' localized on promoter and enhancer of targets genes regulating their expression or their transcription activity. Plays a role, in a LIF-independent manner, in maintainance of self-renewal and pluripotency of embryonic and trophoblast stem cells through different signaling pathways including FGF signaling pathway and Wnt signaling pathways. Involved in morula development (2-16 cells embryos) by acting as a regulator at the 8-cell stage. Upon FGF signaling pathway activation, interacts with KDM1A by directly binding to enhancer site of ELF5 and EOMES and activating their transcription leading to self-renewal of trophoblast stem cells. Also regulates expression of multiple rod-specific genes and is required for survival of this cell type. Plays a role as transcription factor activator of GATA6, NR0B1, POU5F1 and PERM1. Plays a role as transcription factor repressor of NFE2L2 transcriptional activity and ESR1 transcriptional activity. During mitosis remains bound to a subset of interphase target genes, including pluripotency regulators, through the canonical ESRRB recognition (ERRE) sequence, leading to their transcriptional activation in early G1 phase. Can coassemble on structured DNA elements with other transcription factors like SOX2, POU5F1, KDM1A and NCOA3 to trigger ESRRB-dependent gene activation. This mechanism, in the case of SOX2 corecruitment prevents the embryonic stem cells (ESCs) to epiblast stem cells (EpiSC) transition through positive regulation of NR0B1 that inhibits the EpiSC transcriptional program. Also plays a role inner ear development by controlling expression of ion channels and transporters and in early placentation. Transcription factor that binds a canonical ESRRB recognition (ERRE) sequence 5'TCAAGGTCA-3' localized on promoter and enhancer of targets genes regulating their expression or their transcription activity. Positively regulates ESR1 transcriptional activity upon E2 stimulation. This Homo sapiens (Human) protein is Steroid hormone receptor ERR2.